The chain runs to 215 residues: Triosephosphate isomerase (215 aa).

The active-site Electrophile is His-82. The active-site Proton acceptor is the Glu-153.

This sequence belongs to the triosephosphate isomerase family. In terms of assembly, homodimer.

It carries out the reaction D-glyceraldehyde 3-phosphate = dihydroxyacetone phosphate. Its pathway is carbohydrate biosynthesis; gluconeogenesis. It participates in carbohydrate degradation; glycolysis; D-glyceraldehyde 3-phosphate from glycerone phosphate: step 1/1. This Heliothis virescens (Tobacco budworm moth) protein is Triosephosphate isomerase (Tpi).